The sequence spans 432 residues: Glutamyl-tRNA reductase (432 aa).

Substrate is bound by residues 49-52, serine 101, 106-108, and glutamine 112; these read TCNR and EPQ. Cysteine 50 (nucleophile) is an active-site residue. An NADP(+)-binding site is contributed by 181 to 186; the sequence is GAGETI. The segment at 408–432 is disordered; the sequence is PEKPGYRHPPVATPIVRTDDANPAP.

This sequence belongs to the glutamyl-tRNA reductase family. Homodimer.

The catalysed reaction is (S)-4-amino-5-oxopentanoate + tRNA(Glu) + NADP(+) = L-glutamyl-tRNA(Glu) + NADPH + H(+). The protein operates within porphyrin-containing compound metabolism; protoporphyrin-IX biosynthesis; 5-aminolevulinate from L-glutamyl-tRNA(Glu): step 1/2. Its function is as follows. Catalyzes the NADPH-dependent reduction of glutamyl-tRNA(Glu) to glutamate 1-semialdehyde (GSA). This chain is Glutamyl-tRNA reductase, found in Xanthomonas campestris pv. campestris (strain B100).